Reading from the N-terminus, the 916-residue chain is Pertactin autotransporter (916 aa).

Positions 1-37 (MNMSLSRIVKAAPLRRTTLAMALGALGALGAAPAAHA) are cleaved as a signal peptide. Positions 263–265 (RGD) match the Cell attachment site; involved in adhesion to various eukaryotic cell lines motif. 3 tandem repeats follow at residues 269–273 (GGAVP), 274–278 (GGAVP), and 279–283 (GGAVP). Positions 269–288 (GGAVPGGAVPGGAVPGGFGP) are 4 X 5 AA tandem repeats of G-G-A-V-P. Residues 284 to 288 (GGFGP) form a 4; approximate repeat. The segment at 564–613 (SLVGAKAPPAPKPAPQPGPQPGPQPPQPPQPPQRQPEAPAPQPPAGRELS) is disordered. Residues 571 to 607 (PPAPKPAPQPGPQPGPQPPQPPQPPQRQPEAPAPQPP) are compositionally biased toward pro residues. Residues 578–606 (PQPGPQPGPQPPQPPQPPQRQPEAPAPQP) form a 6 X 3 AA repeats of P-Q-P region. In terms of domain architecture, Autotransporter spans 648–916 (LNPDAGGAWG…TFHAGYRYSW (269 aa)). Positions 706–708 (RGD) match the Cell attachment site motif.

In terms of assembly, monomer.

The protein resides in the periplasm. The protein localises to the secreted. It is found in the cell surface. It localises to the cell outer membrane. Its function is as follows. Agglutinogen that binds to eukaryotic cells; a process mediated by the R-G-D sequence. Pertactin may have a role in bacterial adhesion, and thus play a role in virulence. May contribute to the disease state of whooping cough. This is Pertactin autotransporter (prn) from Bordetella bronchiseptica (strain ATCC BAA-588 / NCTC 13252 / RB50) (Alcaligenes bronchisepticus).